The primary structure comprises 246 residues: Probable aquaporin AqpM (246 aa).

Residues 1-12 (MTMTLAKRFTAE) are Cytoplasmic-facing. A helical transmembrane segment spans residues 13–33 (VVGTFILVFFGPGAAVITLMI). Residues 34-56 (ANGADKPNEFNIGIGALGGLGDW) lie on the Extracellular side of the membrane. A helical transmembrane segment spans residues 57 to 77 (FAIGMAFALAIAAVIYSLGRI). Topologically, residues 78–104 (SGAHINPAVTIALWSIGRFPGREVVPY) are cytoplasmic. An NPA 1 motif is present at residues 83 to 85 (NPA). A helical membrane pass occupies residues 105–125 (IVAQFIGAALGSLLFLACVGP). At 126 to 146 (AAATVGGLGATAPFPGIGYGQ) the chain is on the extracellular side. The chain crosses the membrane as a helical span at residues 147 to 167 (AILTEAIGTFLLMLVIMGVAV). The Cytoplasmic segment spans residues 168–173 (DERAPP). Residues 174-194 (GFAGLVIGLTVGGIITTIGNI) form a helical membrane-spanning segment. The Extracellular segment spans residues 195-217 (TGSSLNPARTFGPYLGDSLMGIN). The NPA 2 motif lies at 200-202 (NPA). Residues 218-238 (LWQYFPIYVIGPIVGAVAAAW) form a helical membrane-spanning segment. Residues 239 to 246 (LYNYLAKE) lie on the Cytoplasmic side of the membrane.

The protein belongs to the MIP/aquaporin (TC 1.A.8) family.

The protein resides in the cell membrane. Channel that permits osmotically driven movement of water in both directions. The protein is Probable aquaporin AqpM (aqpM) of Archaeoglobus fulgidus (strain ATCC 49558 / DSM 4304 / JCM 9628 / NBRC 100126 / VC-16).